Consider the following 267-residue polypeptide: Putative carbamate hydrolase RutD (267 aa).

The AB hydrolase-1 domain occupies 14–115; it reads PTLVLSAGLG…EKLVVVNGWP (102 aa).

Belongs to the AB hydrolase superfamily. Hydrolase RutD family.

It carries out the reaction carbamate + 2 H(+) = NH4(+) + CO2. Its function is as follows. Involved in pyrimidine catabolism. May facilitate the hydrolysis of carbamate, a reaction that can also occur spontaneously. The polypeptide is Putative carbamate hydrolase RutD (Serratia proteamaculans (strain 568)).